The primary structure comprises 248 residues: Triosephosphate isomerase (248 aa).

9 to 11 (NWK) lines the substrate pocket. His-94 serves as the catalytic Electrophile. The active-site Proton acceptor is Glu-166. Residues Gly-172, Ser-212, and 233-234 (GG) contribute to the substrate site.

The protein belongs to the triosephosphate isomerase family. In terms of assembly, homodimer.

It is found in the cytoplasm. It catalyses the reaction D-glyceraldehyde 3-phosphate = dihydroxyacetone phosphate. Its pathway is carbohydrate biosynthesis; gluconeogenesis. It functions in the pathway carbohydrate degradation; glycolysis; D-glyceraldehyde 3-phosphate from glycerone phosphate: step 1/1. Functionally, involved in the gluconeogenesis. Catalyzes stereospecifically the conversion of dihydroxyacetone phosphate (DHAP) to D-glyceraldehyde-3-phosphate (G3P). The polypeptide is Triosephosphate isomerase (Alkaliphilus metalliredigens (strain QYMF)).